The sequence spans 329 residues: Probable cell division protein WhiA (329 aa).

A DNA-binding region (H-T-H motif) is located at residues 275–308; the sequence is SLEELGALADPPLTKDAVAGRIRRLLAMADKRAQ.

It belongs to the WhiA family.

In terms of biological role, involved in cell division and chromosome segregation. The polypeptide is Probable cell division protein WhiA (Streptomyces griseus subsp. griseus (strain JCM 4626 / CBS 651.72 / NBRC 13350 / KCC S-0626 / ISP 5235)).